A 148-amino-acid polypeptide reads, in one-letter code: WAP four-disulfide core domain protein 12 (148 aa).

The first 23 residues, 1-23, serve as a signal peptide directing secretion; sequence MRSYSFWFLTAFLVFATLALGEA. In terms of domain architecture, WAP spans 27 to 74; that stretch reads GKEKWGNCPAEKGSCIKSGPSQCHADNDCPGDKKCCFLSCSFKCVSPD. Intrachain disulfides connect C34–C62, C41–C66, C49–C61, and C55–C70. Residues 74-148 form a disordered region; it reads DRIRKEGGNE…QEASPQKEWS (75 aa).

The protein localises to the secreted. In terms of biological role, antibacterial protein. Putative acid-stable proteinase inhibitor. The chain is WAP four-disulfide core domain protein 12 (WFDC12) from Lemur catta (Ring-tailed lemur).